An 874-amino-acid chain; its full sequence is MKAAEIREKFLKFFESKGHTIVRSSSLVPGNDPTLLFTNSGMVQFKDVFLGAESRPYSRATTAQRSVRAGGKHNDLENVGYTARHHTFFEMLGNFSFGDYFKRDAIHYAWELLTGVYQLPKDKLWVTVYHEDDEAHDIWAKEVGVPVERIIRIGDNKGARYASDNFWQMADTGPCGPCSEIFYDHGPDVWGGPPGSPEEDGDRYIEIWNLVFMQFNRDAQGNMTPLPKQCVDTGMGLERIAAVLQHVHSNYEIDLFQALIKAAARETGVSDLTNNSLKVIADHIRACSFLIVDGVIPGNEGRGYVLRRIVRRAIRHGYKLGKKGSFFHRMVADLVAQMGAAYPELKEAEQRVTDVLRQEEERFFETIEHGMSILEGALAELEAGSSKTLDGELAFKLHDTYGFPLDLTADVCREREVTVDEAAFDEAMTRQREQARAAGKFKMAQGLEYSGEKTTFHGYDEVVFDDAKVIALYVEGASVQQASQGQQAVVVLDHTPFYAESGGQVGDQGVLANASVRFAVSDTLKVQADVVGHHGTLEQGTLKVGDVVKAEIDAVRRARTARNHSATHLMHKALREVLGTHVQQKGSLVDADKTRFDFAHNAPLTDEQIRRVEEIVNAEVLANAPGIVRVMSFDEAVKGGAMALFGEKYGDEVRVLDLGFSRELCGGTHVHRTGDIGLFKIVMEGGVAAGIRRVEAITGDNAVRFVQDLDARINAAAAVLKAQPSELTQRIVQVQDQVKSLEKELSALKSKMASSQGDELAGQAIEVGGVHVLAATLEGADVKTLRETVDKLKDKLKSAAIVLASVEGGKVSLIAGVTADASRKVKAGELVNFVAQQVGGKGGGRPDMAQAGGTEPANLPAALAGVKGWVESQL.

4 residues coordinate Zn(2+): histidine 564, histidine 568, cysteine 665, and histidine 669.

Belongs to the class-II aminoacyl-tRNA synthetase family. Zn(2+) is required as a cofactor.

The protein localises to the cytoplasm. It carries out the reaction tRNA(Ala) + L-alanine + ATP = L-alanyl-tRNA(Ala) + AMP + diphosphate. In terms of biological role, catalyzes the attachment of alanine to tRNA(Ala) in a two-step reaction: alanine is first activated by ATP to form Ala-AMP and then transferred to the acceptor end of tRNA(Ala). Also edits incorrectly charged Ser-tRNA(Ala) and Gly-tRNA(Ala) via its editing domain. This is Alanine--tRNA ligase from Paraburkholderia xenovorans (strain LB400).